The following is a 541-amino-acid chain: Chaperonin GroEL (541 aa).

Residues Thr29–Pro32, Asp86–Thr90, Gly413, Asp478–Leu480, and Asp494 contribute to the ATP site.

The protein belongs to the chaperonin (HSP60) family. In terms of assembly, forms a cylinder of 14 subunits composed of two heptameric rings stacked back-to-back. Interacts with the co-chaperonin GroES.

The protein localises to the cytoplasm. The catalysed reaction is ATP + H2O + a folded polypeptide = ADP + phosphate + an unfolded polypeptide.. Functionally, together with its co-chaperonin GroES, plays an essential role in assisting protein folding. The GroEL-GroES system forms a nano-cage that allows encapsulation of the non-native substrate proteins and provides a physical environment optimized to promote and accelerate protein folding. The polypeptide is Chaperonin GroEL (Alkaliphilus oremlandii (strain OhILAs) (Clostridium oremlandii (strain OhILAs))).